A 1139-amino-acid polypeptide reads, in one-letter code: Autophagy-related protein 23 (1139 aa).

9 disordered regions span residues methionine 1–proline 148, serine 225–glutamate 327, leucine 356–aspartate 388, lysine 475–glycine 569, lysine 648–tyrosine 674, arginine 720–glutamate 767, glutamate 786–arginine 828, alanine 935–leucine 961, and histidine 977–threonine 1012. A compositionally biased stretch (basic and acidic residues) spans serine 7 to alanine 18. The segment covering arginine 19–serine 37 has biased composition (low complexity). Coiled coils occupy residues lysine 142–serine 170 and aspartate 215–glutamine 259. Basic and acidic residues-rich tracts occupy residues serine 225–glutamate 247, lysine 261–aspartate 273, alanine 373–serine 385, and lysine 475–serine 494. Positions serine 323–lysine 495 form a coiled coil. Positions proline 496–alanine 522 are enriched in low complexity. Positions glycine 526–lysine 537 are enriched in basic residues. Residues aspartate 566–serine 1067 adopt a coiled-coil conformation. The segment covering serine 651–serine 661 has biased composition (low complexity). 4 stretches are compositionally biased toward basic and acidic residues: residues alanine 728 to glutamate 767, glutamate 786 to glutamine 815, alanine 935 to aspartate 945, and histidine 977 to arginine 1011. A GRIP domain is found at serine 1082–alanine 1132.

The protein belongs to the ATG23 family. In terms of assembly, forms a complex with ATG9 and ATG27.

The protein resides in the cytoplasm. It is found in the preautophagosomal structure membrane. Its function is as follows. Required for cytoplasm to vacuole transport (Cvt) vesicle formation and efficient autophagy. Plays a role in ATG protein retrieval from the pre-autophagosomal structure (PAS) and is especially required for autophagy-dependent cycling of ATG9. Autophagy is required for proper vegetative growth, asexual/sexual reproduction, and full virulence. Autophagy is particularly involved in the biosynthesis of deoxynivalenol (DON), an important virulence determinant. The polypeptide is Autophagy-related protein 23 (Gibberella zeae (strain ATCC MYA-4620 / CBS 123657 / FGSC 9075 / NRRL 31084 / PH-1) (Wheat head blight fungus)).